The chain runs to 333 residues: Holliday junction branch migration complex subunit RuvB (333 aa).

Residues 1–181 form a large ATPase domain (RuvB-L) region; that stretch reads MTRILDNDLI…FGITGHMEYY (181 aa). ATP contacts are provided by residues Leu-20, Arg-21, Gly-62, Lys-65, Thr-66, Thr-67, 128–130, Arg-171, Tyr-181, and Arg-218; that span reads EDF. Thr-66 provides a ligand contact to Mg(2+). A small ATPAse domain (RuvB-S) region spans residues 182 to 252; sequence QTADLTEIVE…ITDKALTMLD (71 aa). Residues 255-333 form a head domain (RuvB-H) region; the sequence is QEGLDYVDQK…HLGYPYEKKH (79 aa). Residues Arg-291, Arg-310, Arg-312, and Arg-315 each contribute to the DNA site.

The protein belongs to the RuvB family. Homohexamer. Forms an RuvA(8)-RuvB(12)-Holliday junction (HJ) complex. HJ DNA is sandwiched between 2 RuvA tetramers; dsDNA enters through RuvA and exits via RuvB. An RuvB hexamer assembles on each DNA strand where it exits the tetramer. Each RuvB hexamer is contacted by two RuvA subunits (via domain III) on 2 adjacent RuvB subunits; this complex drives branch migration. In the full resolvosome a probable DNA-RuvA(4)-RuvB(12)-RuvC(2) complex forms which resolves the HJ.

The protein localises to the cytoplasm. The enzyme catalyses ATP + H2O = ADP + phosphate + H(+). Functionally, the RuvA-RuvB-RuvC complex processes Holliday junction (HJ) DNA during genetic recombination and DNA repair, while the RuvA-RuvB complex plays an important role in the rescue of blocked DNA replication forks via replication fork reversal (RFR). RuvA specifically binds to HJ cruciform DNA, conferring on it an open structure. The RuvB hexamer acts as an ATP-dependent pump, pulling dsDNA into and through the RuvAB complex. RuvB forms 2 homohexamers on either side of HJ DNA bound by 1 or 2 RuvA tetramers; 4 subunits per hexamer contact DNA at a time. Coordinated motions by a converter formed by DNA-disengaged RuvB subunits stimulates ATP hydrolysis and nucleotide exchange. Immobilization of the converter enables RuvB to convert the ATP-contained energy into a lever motion, pulling 2 nucleotides of DNA out of the RuvA tetramer per ATP hydrolyzed, thus driving DNA branch migration. The RuvB motors rotate together with the DNA substrate, which together with the progressing nucleotide cycle form the mechanistic basis for DNA recombination by continuous HJ branch migration. Branch migration allows RuvC to scan DNA until it finds its consensus sequence, where it cleaves and resolves cruciform DNA. The protein is Holliday junction branch migration complex subunit RuvB of Streptococcus equi subsp. zooepidemicus (strain MGCS10565).